The following is a 2774-amino-acid chain: MDVKDRRHRSLTRGRCGKECRYTSSSLDSEDCRVPTQKSYSSSETLKAYDHDSRMHYGNRVTDLVHRESDEFSRQGANFTLAELGICEPSPHRSGYCSDMGILHQGYSLSTGSDADSDTEGGMSPEHAIRLWGRGIKSRRSSGLSSRENSALTLTDSDNENKSDDDNGRPIPPTSSSSLLPSAQLPSSHNPPPVSCQMPLLDSNTSHQIMDTNPDEEFSPNSYLLRACSGPQQASSSGPPNHHSQSTLRPPLPPPHNHTLSHHHSSANSLNRNSLTNRRSQIHAPAPAPNDLATTPESVQLQDSWVLNSNVPLETRHFLFKTSSGSTPLFSSSSPGYPLTSGTVYTPPPRLLPRNTFSRKAFKLKKPSKYCSWKCAALSAIAAALLLAILLAYFIAMHLLGLNWQLQPADGHTFNNGVRTGLPGNDDVATVPSGGKVPWSLKNSSIDSGEAEVGRRVTQEVPPGVFWRSQIHISQPQFLKFNISLGKDALFGVYIRRGLPPSHAQYDFMERLDGKEKWSVVESPRERRSIQTLVQNEAVFVQYLDVGLWHLAFYNDGKDKEMVSFNTVVLDSVQDCPRNCHGNGECVSGLCHCFPGFLGADCAKAACPVLCSGNGQYSKGTCQCYSGWKGAECDVPMNQCIDPSCGGHGSCIDGNCVCAAGYKGEHCEEVDCLDPTCSSHGVCVNGECLCSPGWGGLNCELARVQCPDQCSGHGTYLPDSGLCNCDPNWMGPDCSVEVCSVDCGTHGVCIGGACRCEEGWTGAACDQRVCHPRCIEHGTCKDGKCECREGWNGEHCTIGRQTAGTETDGCPDLCNGNGRCTLGQNSWQCVCQTGWRGPGCNVAMETSCADNKDNEGDGLVDCLDPDCCLQSACQNSLLCRGSRDPLDIIQQGQTDWPAVKSFYDRIKLLAGKDSTHIIPGDNPFNSSLVSLIRGQVVTTDGTPLVGVNVSFVKYPKYGYTITRQDGTFDLIANGGSALTLHFERAPFMSRERTVWPPWNSFYAMDTLVMKTEENSIPSCDLSGFVRPDPIIISSPLSTFFSASPAANPIVPETQVLHEEIELPGTNVKLRYLSSRTAGYKSLLKITMTQSTVPLNLIRVHLMVAVEGHLFQKSFQASPNLAYTFIWDKTDAYGQRVYGLSDAVVSVGFEYETCPSLILWEKRTALLQGFELDPSNLGGWSLDKHHTLNVKSGILLKGTGENQFLTQQPAIITSIMGNGRRRSISCPSCNGLAEGNKLLAPVALAVGIDGSLFVGDFNYIRRIFPSRNVTSILELRNKEFKHSNSPGHKYYLAVDPVTGSLYVSDTNSRRIYRVKSLSGAKDLAGNSEVVAGTGEQCLPFDEARCGDGGKAVDATLMSPRGIAVDKNGLMYFVDATMIRKVDQNGIISTLLGSNDLTAVRPLSCDSSMDVAQVRLEWPTDLAVNPMDNSLYVLENNVILRITENHQVSIIAGRPMHCQVPGIDYSLSKLAIHSALESASAIAISHTGVLYITETDEKKINRLRQVTTNGEICLLAGAASDCDCKNDVNCICYSGDDAYATDAILNSPSSLAVAPDGTIYIADLGNIRIRAVSKNKPVLNAFNQYEAASPGEQELYVFNADGIHQYTVSLVTGEYLYNFTYSADNDVTELIDNNGNSLKIRRDSSGMPRHLLMPDNQIITLTVGTNGGLKAVSTQNLELGLMTYDGNTGLLATKSDETGWTTFYDYDHEGRLTNVTRPTGVVTSLHREMEKSITVDIENSNRDNDVTVITNLSSVEASYTVVQDQVRNSYQLCSNGTLRVMYANGMGVSFHSEPHVLAGTLTPTIGRCNISLPMENGLNSIEWRLRKEQIKGKVTIFGRKLRVHGRNLLSIDYDRNIRTEKIYDDHRKFTLRIIYDQVGRPFLWLPSSGLAAVNVSYFFNGRLAGLQRGAMSERTDIDKQGRIVSRMFADGKVWSYSYLDKSMVLLLQSQRQYIFEYDSSDRLHAVTMPSVARHSMSTHTSIGYIRNIYNPPESNASVIFDYSDDGRILKTSFLGTGRQVFYKYGKLSKLSEIVYDSTAVTFGYDETTGVLKMVNLQSGGFSCTIRYRKVGPLVDKQIYRFSEEGMINARFDYTYHDNSFRIASIKPVISETPLPVDLYRYDEISGKVEHFGKFGVIYYDINQIITTAVMTLSKHFDTHGRIKEVQYEMFRSLMYWMTVQYDSMGRVIKRELKLGPYANTTKYTYDYDGDGQLQSVAVNDRPTWRYSYDLNGNLHLLNPGNSARLMPLRYDLRDRITRLGDVQYKIDDDGYLCQRGSDIFEYNSKGLLTRAYNKASGWSVQYRYDGVSRRASYKTNLGHHLQYFYSDLHHPTRITHVYNHSNSEITSLYYDLQGHLFAMESSSGEEYYVASDNTGTPLAVFSINGLMIKQLQYTAYGEIYYDSNPDFQMVIGFHGGLYDPLTKLVHFTQRDYDVLAGRWTSPDYTMWRNVGKEPAPFNLYMFKNNNPLSNELDLKNYVTDVKSWLVMFGFQLSNIIPGFPRAKMYFVPPPYELSESQASENGQLITGVQQTTERHNQAFLALEGQVISKKLHAGIREKAGHWFATTTPIIGKGIMFAIKEGRVTTGVSSIASEDSRKVASVLNNAYYLDKMHYSIEGKDTHYFVKIGAADGDLVTLGTTIGRKVLESGVNVTVSQPTLLVNGRTRRFTNIEFQYSTLLLSIRYGLTPDTLDEEKARVLDQARQRALGTAWAKEQQKARDGREGSRLWTEGEKQQLLSTGRVQGYEGYYVLPVEQYPELADSSSNIQFLRQNEMGKR.

Residues 1 to 375 (MDVKDRRHRS…KPSKYCSWKC (375 aa)) enclose the Teneurin N-terminal domain. Topologically, residues 1 to 379 (MDVKDRRHRS…YCSWKCAALS (379 aa)) are cytoplasmic. A phosphoserine mark is found at S90 and S124. The interval 111–271 (TGSDADSDTE…HHHSSANSLN (161 aa)) is disordered. Residues 141 to 155 (SSGLSSRENSALTLT) show a composition bias toward polar residues. T155 carries the post-translational modification Phosphothreonine. S157 carries the post-translational modification Phosphoserine. Residues 159 to 168 (NENKSDDDNG) show a composition bias toward basic and acidic residues. Residues 174 to 188 (TSSSSLLPSAQLPSS) are compositionally biased toward low complexity. The segment covering 202-211 (DSNTSHQIMD) has biased composition (polar residues). Residues 229-240 (SGPQQASSSGPP) are compositionally biased toward low complexity. A helical membrane pass occupies residues 380–400 (AIAAALLLAILLAYFIAMHLL). The Extracellular segment spans residues 401–2774 (GLNWQLQPAD…FLRQNEMGKR (2374 aa)). N-linked (GlcNAc...) asparagine glycans are attached at residues N443 and N482. 8 consecutive EGF-like domains span residues 575-603 (DCPRNCHGNGECVSGLCHCFPGFLGADCA), 605-634 (AACPVLCSGNGQYSKGTCQCYSGWKGAECD), 636-668 (PMNQCIDPSCGGHGSCIDGNCVCAAGYKGEHCE), 669-701 (EVDCLDPTCSSHGVCVNGECLCSPGWGGLNCEL), 702-735 (ARVQCPDQCSGHGTYLPDSGLCNCDPNWMGPDCS), 738-766 (VCSVDCGTHGVCIGGACRCEEGWTGAACD), 769-797 (VCHPRCIEHGTCKDGKCECREGWNGEHCT), and 808-841 (DGCPDLCNGNGRCTLGQNSWQCVCQTGWRGPGCN). 22 disulfides stabilise this stretch: C576-C586, C580-C591, C593-C602, C611-C622, C624-C633, C640-C651, C645-C656, C658-C667, C672-C683, C677-C688, C690-C699, C710-C723, C725-C734, C739-C749, C743-C754, C756-C765, C770-C780, C774-C785, C787-C796, C810-C820, C814-C829, and C831-C840. 3 N-linked (GlcNAc...) asparagine glycosylation sites follow: N925, N948, and N1267. NHL repeat units follow at residues 1272 to 1316 (LELR…VKSL), 1342 to 1386 (ARCG…NGII), 1401 to 1452 (LSCD…IAGR), 1474 to 1501 (LESASAIAISHTGVLYITETDEKKINRL), and 1530 to 1573 (CYSG…VSKN). Residues 1583-1602 (YEAASPGEQELYVFNADGIH) form a YD 1 repeat. N1616 carries N-linked (GlcNAc...) asparagine glycosylation. YD repeat units follow at residues 1619–1639 (YSADNDVTELIDNNGNSLKIR), 1682–1701 (YDGNTGLLATKSDETGWTTF), and 1702–1724 (YDYDHEGRLTNVTRPTGVVTSLH). N-linked (GlcNAc...) asparagine glycosylation is found at N1712, N1749, N1773, N1807, and N1892. 18 YD repeats span residues 1895–1914 (YFFNGRLAGLQRGAMSERTD), 1936–1954 (YLDKSMVLLLQSQRQYIFE), 1955–1975 (YDSSDRLHAVTMPSVARHSMS), 1982–1999 (YIRNIYNPPESNASVIFD), 2000–2021 (YSDDGRILKTSFLGTGRQVFYK), 2022–2039 (YGKLSKLSEIVYDSTAVT), 2042–2062 (YDETTGVLKMVNLQSGGFSCT), 2065–2085 (YRKVGPLVDKQIYRFSEEGMI), 2093–2113 (YHDNSFRIASIKPVISETPLP), 2119–2136 (YDEISGKVEHFGKFGVIY), 2137–2163 (YDINQIITTAVMTLSKHFDTHGRIKEV), 2165–2178 (YEMFRSLMYWMTVQ), 2179–2202 (YDSMGRVIKRELKLGPYANTTKYT), 2205–2225 (YDGDGQLQSVAVNDRPTWRYS), 2226–2246 (YDLNGNLHLLNPGNSARLMPL), 2248–2268 (YDLRDRITRLGDVQYKIDDDG), 2280–2300 (YNSKGLLTRAYNKASGWSVQY), and 2302–2322 (YDGVSRRASYKTNLGHHLQYF). A glycan (N-linked (GlcNAc...) asparagine) is linked at N1993. A glycan (N-linked (GlcNAc...) asparagine) is linked at N2197. Residue N2337 is glycosylated (N-linked (GlcNAc...) asparagine). The YD 23 repeat unit spans residues 2348 to 2389 (YDLQGHLFAMESSSGEEYYVASDNTGTPLAVFSINGLMIKQL). N-linked (GlcNAc...) asparagine glycosylation is present at N2648.

The protein belongs to the tenascin family. Teneurin subfamily. As to quaternary structure, homodimer; disulfide-linked. Heterodimer with either TENM1 or TENM3. May also form heterodimer with TENM4. Interacts with ADGRL1 isoform 2. In terms of processing, derives from the membrane form by proteolytic processing. Derives from the plasma membrane form by proteolytic cleavage and translocates to the nucleus. Homophilic binding of the C-terminal extracellular domain stimulates its proteolytic cleavage and release in the cytoplasmic. Is subjected to rapid degradation by the proteasome pathway. As to expression, expressed in the brain (at protein level).

The protein resides in the cell membrane. Its subcellular location is the presynaptic cell membrane. It is found in the postsynaptic cell membrane. It localises to the endoplasmic reticulum. The protein localises to the golgi apparatus. The protein resides in the synapse. Its subcellular location is the cell projection. It is found in the dendritic spine. It localises to the filopodium. The protein localises to the growth cone. The protein resides in the nucleus. Its subcellular location is the PML body. Functionally, involved in neural development, regulating the establishment of proper connectivity within the nervous system. Acts as a ligand of the ADGRL1 and ADGRL3 receptors that are expressed at the surface of adjacent cells. Promotes the formation of filopodia and enlarged growth cone in neuronal cells. Mediates axon guidance and homophilic and heterophilic cell-cell adhesion. May function as a cellular signal transducer. Its function is as follows. Induces gene transcription inhibition. This chain is Teneurin-2 (Tenm2), found in Rattus norvegicus (Rat).